The chain runs to 169 residues: uncharacterized protein (169 aa).

Its subcellular location is the mitochondrion. This is an uncharacterized protein from Paramecium tetraurelia.